Consider the following 2223-residue polypeptide: Protein Ycf2 (2223 aa).

1576-1583 (GSIGTGRS) is an ATP binding site.

It belongs to the Ycf2 family.

Its subcellular location is the plastid. It is found in the chloroplast stroma. In terms of biological role, probable ATPase of unknown function. Its presence in a non-photosynthetic plant (Epifagus virginiana) and experiments in tobacco indicate that it has an essential function which is probably not related to photosynthesis. The polypeptide is Protein Ycf2 (Silene latifolia (White campion)).